The primary structure comprises 649 residues: Threonine--tRNA ligase (649 aa).

The TGS domain maps to 1–61; sequence MIKITFPDGA…TQDGSIEIVT (61 aa). The tract at residues 242 to 540 is catalytic; sequence DHRKLGKELD…LIETYKGAFP (299 aa). 3 residues coordinate Zn(2+): Cys-336, His-387, and His-517.

It belongs to the class-II aminoacyl-tRNA synthetase family. Homodimer. Zn(2+) serves as cofactor.

Its subcellular location is the cytoplasm. It carries out the reaction tRNA(Thr) + L-threonine + ATP = L-threonyl-tRNA(Thr) + AMP + diphosphate + H(+). Functionally, catalyzes the attachment of threonine to tRNA(Thr) in a two-step reaction: L-threonine is first activated by ATP to form Thr-AMP and then transferred to the acceptor end of tRNA(Thr). Also edits incorrectly charged L-seryl-tRNA(Thr). The sequence is that of Threonine--tRNA ligase from Streptococcus mutans serotype c (strain ATCC 700610 / UA159).